The primary structure comprises 482 residues: Cytochrome c-552 (482 aa).

An N-terminal signal peptide occupies residues 1–26; that stretch reads MIKVSNALQRILIGAALALFGGGAQA. Histidine 98 lines the heme c pocket. Residues cysteine 126, cysteine 129, and lysine 130 each contribute to the heme site. Residues cysteine 164, cysteine 167, histidine 168, cysteine 213, cysteine 216, and histidine 217 each coordinate heme c. Glutamate 219, tyrosine 220, lysine 265, and glutamine 267 together coordinate Ca(2+). Residue tyrosine 220 participates in substrate binding. Histidine 268 is a binding site for substrate. Positions 279, 286, 289, 290, 305, 318, 321, 322, and 397 each coordinate heme c.

The protein belongs to the cytochrome c-552 family. It depends on Ca(2+) as a cofactor. Heme c serves as cofactor.

Its subcellular location is the periplasm. It carries out the reaction 6 Fe(III)-[cytochrome c] + NH4(+) + 2 H2O = 6 Fe(II)-[cytochrome c] + nitrite + 8 H(+). The protein operates within nitrogen metabolism; nitrate reduction (assimilation). Catalyzes the reduction of nitrite to ammonia, consuming six electrons in the process. This is Cytochrome c-552 from Edwardsiella ictaluri (strain 93-146).